Here is a 214-residue protein sequence, read N- to C-terminus: Orotate phosphoribosyltransferase (214 aa).

Residue K26 coordinates 5-phospho-alpha-D-ribose 1-diphosphate. Residue 34–35 (FF) participates in orotate binding. 5-phospho-alpha-D-ribose 1-diphosphate is bound by residues 72–73 (YK), R99, K100, K103, H105, and 124–132 (DDVITAGTA). Residues T128 and R157 each coordinate orotate.

It belongs to the purine/pyrimidine phosphoribosyltransferase family. PyrE subfamily. In terms of assembly, homodimer. Requires Mg(2+) as cofactor.

The catalysed reaction is orotidine 5'-phosphate + diphosphate = orotate + 5-phospho-alpha-D-ribose 1-diphosphate. The protein operates within pyrimidine metabolism; UMP biosynthesis via de novo pathway; UMP from orotate: step 1/2. Catalyzes the transfer of a ribosyl phosphate group from 5-phosphoribose 1-diphosphate to orotate, leading to the formation of orotidine monophosphate (OMP). The sequence is that of Orotate phosphoribosyltransferase from Pseudomonas fluorescens (strain Pf0-1).